The following is a 122-amino-acid chain: Large ribosomal subunit protein uL14 (122 aa).

The protein belongs to the universal ribosomal protein uL14 family. Part of the 50S ribosomal subunit. Forms a cluster with proteins L3 and L19. In the 70S ribosome, L14 and L19 interact and together make contacts with the 16S rRNA in bridges B5 and B8.

Functionally, binds to 23S rRNA. Forms part of two intersubunit bridges in the 70S ribosome. This Desulfosudis oleivorans (strain DSM 6200 / JCM 39069 / Hxd3) (Desulfococcus oleovorans) protein is Large ribosomal subunit protein uL14.